The primary structure comprises 145 residues: MLLTTPFVSSPVRVQGNGGSGASPWAGAATALRIQAAKQLTGRVVTTKADKTVGVEVVRLAPHPKYKRRERIKKKYQAHDPDNQFKVGDVVELRRSRPISKTKHFLAVPLPPRDTRRKSQLLPPLQSQSQSQDQDQPPTPPPSSD.

The transit peptide at 1–36 (MLLTTPFVSSPVRVQGNGGSGASPWAGAATALRIQA) directs the protein to the chloroplast. The tract at residues 101–145 (KTKHFLAVPLPPRDTRRKSQLLPPLQSQSQSQDQDQPPTPPPSSD) is disordered. Residues 120-136 (QLLPPLQSQSQSQDQDQ) are compositionally biased toward low complexity.

Belongs to the universal ribosomal protein uS17 family. As to quaternary structure, part of the 30S ribosomal subunit.

It localises to the plastid. The protein resides in the chloroplast. Its function is as follows. One of the primary rRNA binding proteins, it binds specifically to the 5'-end of 16S ribosomal RNA. In Oryza sativa subsp. japonica (Rice), this protein is Small ribosomal subunit protein uS17c (RPS17).